Consider the following 395-residue polypeptide: Probable G-protein coupled receptor npr-29 (395 aa).

Transmembrane regions (helical) follow at residues 38–58 (VVGFVINAWVLYVVAPLLFAP), 66–86 (ILFYIFALCVGDLMTMIAMLL), 89–109 (IELVFGTWQFSSMVCTSYLIF), and 148–168 (AIIQFCIAFAFVMILLWPVFA). N-linked (GlcNAc...) asparagine glycosylation occurs at N180. Transmembrane regions (helical) follow at residues 202-222 (FWFNLIACITSYAVPLFGIIY), 252-272 (VITTVLLLTVIYVLCWTPYWV), and 287-307 (IIIISYFIHLLPYISCVAYPL).

This sequence belongs to the G-protein coupled receptor 1 family.

The protein localises to the cell membrane. Its function is as follows. Not known. Putative receptor. This Caenorhabditis elegans protein is Probable G-protein coupled receptor npr-29.